The primary structure comprises 131 residues: Phosphoribosyl-AMP cyclohydrolase (131 aa).

Residue D78 participates in Mg(2+) binding. C79 contributes to the Zn(2+) binding site. The Mg(2+) site is built by D80 and D82. Zn(2+) contacts are provided by C96 and C103.

The protein belongs to the PRA-CH family. As to quaternary structure, homodimer. Mg(2+) serves as cofactor. Zn(2+) is required as a cofactor.

It localises to the cytoplasm. The catalysed reaction is 1-(5-phospho-beta-D-ribosyl)-5'-AMP + H2O = 1-(5-phospho-beta-D-ribosyl)-5-[(5-phospho-beta-D-ribosylamino)methylideneamino]imidazole-4-carboxamide. It participates in amino-acid biosynthesis; L-histidine biosynthesis; L-histidine from 5-phospho-alpha-D-ribose 1-diphosphate: step 3/9. Functionally, catalyzes the hydrolysis of the adenine ring of phosphoribosyl-AMP. This Neisseria meningitidis serogroup C / serotype 2a (strain ATCC 700532 / DSM 15464 / FAM18) protein is Phosphoribosyl-AMP cyclohydrolase.